A 417-amino-acid polypeptide reads, in one-letter code: Tryptophan synthase beta chain (417 aa).

At K111 the chain carries N6-(pyridoxal phosphate)lysine.

This sequence belongs to the TrpB family. Tetramer of two alpha and two beta chains. It depends on pyridoxal 5'-phosphate as a cofactor.

It carries out the reaction (1S,2R)-1-C-(indol-3-yl)glycerol 3-phosphate + L-serine = D-glyceraldehyde 3-phosphate + L-tryptophan + H2O. It functions in the pathway amino-acid biosynthesis; L-tryptophan biosynthesis; L-tryptophan from chorismate: step 5/5. In terms of biological role, the beta subunit is responsible for the synthesis of L-tryptophan from indole and L-serine. The sequence is that of Tryptophan synthase beta chain from Fervidobacterium nodosum (strain ATCC 35602 / DSM 5306 / Rt17-B1).